Here is a 112-residue protein sequence, read N- to C-terminus: UPF0060 membrane protein Daro_2632 (112 aa).

4 helical membrane passes run valine 7 to leucine 27, proline 34 to leucine 54, alanine 59 to tryptophan 79, and tryptophan 89 to alanine 109.

Belongs to the UPF0060 family.

Its subcellular location is the cell inner membrane. This Dechloromonas aromatica (strain RCB) protein is UPF0060 membrane protein Daro_2632.